Consider the following 248-residue polypeptide: Proteasome subunit alpha type-7 (248 aa).

A glycan (O-linked (GlcNAc) serine) is linked at Ser130. The residue at position 153 (Tyr153) is a Phosphotyrosine.

Belongs to the peptidase T1A family. The 26S proteasome consists of a 20S proteasome core and two 19S regulatory subunits. The 20S proteasome core is a barrel-shaped complex made of 28 subunits that are arranged in four stacked rings. The two outer rings are each formed by seven alpha subunits, and the two inner rings are formed by seven beta subunits. The proteolytic activity is exerted by three beta-subunits PSMB5, PSMB6 and PSMB7. PSMA7 interacts directly with the PSMG1-PSMG2 heterodimer which promotes 20S proteasome assembly. Interacts with HIF1A. Interacts with RAB7A. Interacts with PRKN. Interacts with ABL1 and ABL2. Interacts with EMAP2. Interacts with MAVS.

The protein resides in the cytoplasm. It is found in the nucleus. In terms of biological role, component of the 20S core proteasome complex involved in the proteolytic degradation of most intracellular proteins. This complex plays numerous essential roles within the cell by associating with different regulatory particles. Associated with two 19S regulatory particles, forms the 26S proteasome and thus participates in the ATP-dependent degradation of ubiquitinated proteins. The 26S proteasome plays a key role in the maintenance of protein homeostasis by removing misfolded or damaged proteins that could impair cellular functions, and by removing proteins whose functions are no longer required. Associated with the PA200 or PA28, the 20S proteasome mediates ubiquitin-independent protein degradation. This type of proteolysis is required in several pathways including spermatogenesis (20S-PA200 complex) or generation of a subset of MHC class I-presented antigenic peptides (20S-PA28 complex). Inhibits the transactivation function of HIF-1A under both normoxic and hypoxia-mimicking conditions. The interaction with EMAP2 increases the proteasome-mediated HIF-1A degradation under the hypoxic conditions. Plays a role in hepatitis C virus internal ribosome entry site-mediated translation. Mediates nuclear translocation of the androgen receptor (AR) and thereby enhances androgen-mediated transactivation. Promotes MAVS degradation and thereby negatively regulates MAVS-mediated innate immune response. In Pongo abelii (Sumatran orangutan), this protein is Proteasome subunit alpha type-7 (PSMA7).